Here is a 325-residue protein sequence, read N- to C-terminus: Necdin (325 aa).

2 disordered regions span residues 1–69 (MSEQ…IEDV) and 77–96 (AAEEGRAHQPQSPARPIPAP). An MAGE domain is found at 102 to 301 (LVQKAHELMW…QAWPSRYREA (200 aa)).

Binds to the transactivation domains of E2F1 and p53. Binds also SV40 large T antigen and adenovirus E1A. Interacts with nucleobindin 1 and 2. As to expression, brain specific. Not detected in other tissues. Expressed in postmitotic neurons. In adult brain the highest expression is in hypothalamus. Highly expressed in thalamus and midbrain. Relatively low levels are in cerebral cortex, hippocampus, striatum, olfactory bulb, cerebellum, pons and spinal cord. Also detected in neurally differentiated embryonal carcinoma cells.

The protein localises to the cytoplasm. Its subcellular location is the nucleus. It localises to the nucleoplasm. The protein resides in the nucleus matrix. Its function is as follows. Growth suppressor that facilitates the entry of the cell into cell cycle arrest. Functionally similar to the retinoblastoma protein it binds to and represses the activity of cell-cycle-promoting proteins such as SV40 large T antigen, adenovirus E1A, and the transcription factor E2F. Necdin also interacts with p53 and works in an additive manner to inhibit cell growth. Also functions as a transcription factor and directly binds to specific guanosine-rich DNA sequences. The sequence is that of Necdin (Ndn) from Mus musculus (Mouse).